The following is a 70-amino-acid chain: Kappa-scoloptoxin(07)-Ssm2b (70 aa).

A signal peptide spans 1-19 (MLVFYALLFVSVFSSTVMG). Residues 20-39 (ATIDKPILREAIEEIDVNKR) constitute a propeptide that is removed on maturation.

It belongs to the scoloptoxin-07 family. In terms of processing, contains 3 disulfide bonds. In terms of tissue distribution, expressed by the venom gland.

The protein localises to the secreted. Inhibits voltage-gated potassium channels. In Scolopendra mutilans (Chinese red-headed centipede), this protein is Kappa-scoloptoxin(07)-Ssm2b.